A 149-amino-acid polypeptide reads, in one-letter code: Large ribosomal subunit protein bL9 (149 aa).

The protein belongs to the bacterial ribosomal protein bL9 family.

Binds to the 23S rRNA. This Desulforamulus reducens (strain ATCC BAA-1160 / DSM 100696 / MI-1) (Desulfotomaculum reducens) protein is Large ribosomal subunit protein bL9.